Here is a 36-residue protein sequence, read N- to C-terminus: Cytochrome b6-f complex subunit 7 (36 aa).

Residues 5–25 form a helical membrane-spanning segment; the sequence is IFFVAGLVFVLTLVGMAIGFG.

This sequence belongs to the PetM family. As to quaternary structure, the 4 large subunits of the cytochrome b6-f complex are cytochrome b6, subunit IV (17 kDa polypeptide, PetD), cytochrome f and the Rieske protein, while the 4 small subunits are PetG, PetL, PetM and PetN. The complex functions as a dimer.

The protein resides in the cell inner membrane. Component of the cytochrome b6-f complex, which mediates electron transfer between photosystem II (PSII) and photosystem I (PSI), cyclic electron flow around PSI, and state transitions. In Gloeobacter violaceus (strain ATCC 29082 / PCC 7421), this protein is Cytochrome b6-f complex subunit 7.